A 75-amino-acid chain; its full sequence is Small ribosomal subunit protein bS16 (75 aa).

Belongs to the bacterial ribosomal protein bS16 family.

This chain is Small ribosomal subunit protein bS16, found in Campylobacter lari (strain RM2100 / D67 / ATCC BAA-1060).